A 731-amino-acid chain; its full sequence is Elongation factor 2 (731 aa).

Residues 19 to 260 (KHIRNIGIVA…MVVHHLPNPL (242 aa)) form the tr-type G domain. GTP contacts are provided by residues 28–35 (AHIDHGKT), 94–98 (DTPGH), and 148–151 (NKVD). His-597 carries the post-translational modification Diphthamide.

It belongs to the TRAFAC class translation factor GTPase superfamily. Classic translation factor GTPase family. EF-G/EF-2 subfamily.

The protein resides in the cytoplasm. In terms of biological role, catalyzes the GTP-dependent ribosomal translocation step during translation elongation. During this step, the ribosome changes from the pre-translocational (PRE) to the post-translocational (POST) state as the newly formed A-site-bound peptidyl-tRNA and P-site-bound deacylated tRNA move to the P and E sites, respectively. Catalyzes the coordinated movement of the two tRNA molecules, the mRNA and conformational changes in the ribosome. This is Elongation factor 2 from Methanoregula boonei (strain DSM 21154 / JCM 14090 / 6A8).